Here is a 275-residue protein sequence, read N- to C-terminus: Elongation factor Ts (275 aa).

The interval 76-79 (TDFV) is involved in Mg(2+) ion dislocation from EF-Tu.

It belongs to the EF-Ts family.

It is found in the cytoplasm. In terms of biological role, associates with the EF-Tu.GDP complex and induces the exchange of GDP to GTP. It remains bound to the aminoacyl-tRNA.EF-Tu.GTP complex up to the GTP hydrolysis stage on the ribosome. The sequence is that of Elongation factor Ts from Corynebacterium diphtheriae (strain ATCC 700971 / NCTC 13129 / Biotype gravis).